A 486-amino-acid chain; its full sequence is Inosine-5'-monophosphate dehydrogenase (486 aa).

CBS domains are found at residues 99 to 154 (IVED…LVKE) and 156 to 215 (MTKE…VRDE). NAD(+) is bound by residues Asp247 and 294–296 (GIG). K(+) contacts are provided by Gly296 and Gly298. Ser299 lines the IMP pocket. Position 301 (Cys301) interacts with K(+). Residue Cys301 is the Thioimidate intermediate of the active site. Residues 334 to 336 (DGG), 357 to 358 (GN), and 381 to 385 (YRGMG) each bind IMP. The active-site Proton acceptor is Arg397. Glu412 serves as a coordination point for IMP. Glu466, Ser467, and His468 together coordinate K(+).

The protein belongs to the IMPDH/GMPR family. In terms of assembly, homotetramer. K(+) serves as cofactor.

The catalysed reaction is IMP + NAD(+) + H2O = XMP + NADH + H(+). It functions in the pathway purine metabolism; XMP biosynthesis via de novo pathway; XMP from IMP: step 1/1. Its activity is regulated as follows. Mycophenolic acid (MPA) is a non-competitive inhibitor that prevents formation of the closed enzyme conformation by binding to the same site as the amobile flap. In contrast, mizoribine monophosphate (MZP) is a competitive inhibitor that induces the closed conformation. MPA is a potent inhibitor of mammalian IMPDHs but a poor inhibitor of the bacterial enzymes. MZP is a more potent inhibitor of bacterial IMPDH. Its function is as follows. Catalyzes the conversion of inosine 5'-phosphate (IMP) to xanthosine 5'-phosphate (XMP), the first committed and rate-limiting step in the de novo synthesis of guanine nucleotides, and therefore plays an important role in the regulation of cell growth. The sequence is that of Inosine-5'-monophosphate dehydrogenase from Pyrococcus horikoshii (strain ATCC 700860 / DSM 12428 / JCM 9974 / NBRC 100139 / OT-3).